The chain runs to 451 residues: uncharacterized protein (451 aa).

The HD domain occupies 50–147 (RFEHSLGTMF…DVDADRMDYL (98 aa)).

This is an uncharacterized protein from Methanocaldococcus jannaschii (strain ATCC 43067 / DSM 2661 / JAL-1 / JCM 10045 / NBRC 100440) (Methanococcus jannaschii).